The chain runs to 367 residues: UDP-N-acetylglucosamine--N-acetylmuramyl-(pentapeptide) pyrophosphoryl-undecaprenol N-acetylglucosamine transferase (367 aa).

UDP-N-acetyl-alpha-D-glucosamine is bound by residues 15–17, N127, R163, S191, I249, and Q294; that span reads TGG.

It belongs to the glycosyltransferase 28 family. MurG subfamily.

The protein resides in the cell inner membrane. It carries out the reaction di-trans,octa-cis-undecaprenyl diphospho-N-acetyl-alpha-D-muramoyl-L-alanyl-D-glutamyl-meso-2,6-diaminopimeloyl-D-alanyl-D-alanine + UDP-N-acetyl-alpha-D-glucosamine = di-trans,octa-cis-undecaprenyl diphospho-[N-acetyl-alpha-D-glucosaminyl-(1-&gt;4)]-N-acetyl-alpha-D-muramoyl-L-alanyl-D-glutamyl-meso-2,6-diaminopimeloyl-D-alanyl-D-alanine + UDP + H(+). It participates in cell wall biogenesis; peptidoglycan biosynthesis. Cell wall formation. Catalyzes the transfer of a GlcNAc subunit on undecaprenyl-pyrophosphoryl-MurNAc-pentapeptide (lipid intermediate I) to form undecaprenyl-pyrophosphoryl-MurNAc-(pentapeptide)GlcNAc (lipid intermediate II). The sequence is that of UDP-N-acetylglucosamine--N-acetylmuramyl-(pentapeptide) pyrophosphoryl-undecaprenol N-acetylglucosamine transferase from Burkholderia vietnamiensis (strain G4 / LMG 22486) (Burkholderia cepacia (strain R1808)).